Consider the following 262-residue polypeptide: Endoplasmic reticulum chaperone BiP (262 aa).

8–11 (GSTR) contacts ATP. Positions 53 to 63 (QDTGDLVLLDV) are interdomain linker. Positions 64-144 (CPLTLGIETV…PRGVPQIEVT (81 aa)) are substrate-binding (SBD). At Lys-91 the chain carries N6-succinyllysine. Position 136 is an omega-N-methylarginine (Arg-136). An O-AMP-threonine; alternate modification is found at Thr-162. Position 162 is a phosphothreonine; alternate (Thr-162). Position 229 is an N6,N6,N6-trimethyllysine; by METTL21A; in vitro (Lys-229). Lys-229 is subject to N6,N6-dimethyllysine; alternate. Lys-229 carries the N6-methyllysine; alternate modification. An N6-methyllysine modification is found at Lys-235.

This sequence belongs to the heat shock protein 70 family. As to quaternary structure, monomer and homooligomer; homooligomerization via the interdomain linker inactivates the chaperone activity and acts as a storage of HSPA5/BiP molecules. Interacts with DNAJC1 (via J domain). Component of an EIF2 complex at least composed of CELF1/CUGBP1, CALR, CALR3, EIF2S1, EIF2S2, HSP90B1 and HSPA5. Part of a large chaperone multiprotein complex comprising DNAJB11, HSP90B1, HSPA5, HYOU, PDIA2, PDIA4, PDIA6, PPIB, SDF2L1, UGGT1 and very small amounts of ERP29, but not, or at very low levels, CALR nor CANX. Interacts with TMEM132A and TRIM21. May form a complex with ERLEC1, OS9, SEL1L and SYVN1. Interacts with DNAJC10. Interacts with DNAJB9/ERdj4; leading to recruit HSPA5/BiP to ERN1/IRE1. Interacts with ERN1/IRE1 (via luminal domain); the interaction takes place following interaction with DNAJB9/ERdj4 and leads to inactivate ERN1/IRE1, the interaction also competitively inhibits ERN1 interaction with MANF. Interacts directly with MANF (via SAP domain); the interaction inhibits ATP binding to HSPA5/BiP and subsequent nucleotide exchange. Interacts with EIF2AK3/PERK (via luminal domain); interaction leads to inactivate EIF2AK3/PERK. Interacts with MX1. Interacts with METTL23. Interacts with CEMIP; the interaction induces calcium leakage from the endoplasmic reticulum and cell migration. Interacts with PCSK4 form; the interaction takes place in the endoplasmic reticulum. Interacts with CIPC. Interacts with CCDC88B (via C-terminus); the interaction opposes ERN1-mediated JNK activation, protecting against apoptosis. Interacts with INPP5K; necessary for INPP5K localization at the endoplasmic reticulum. Interacts with MANF; the interaction is direct. Interacts with LOXL2; leading to activate the ERN1/IRE1-XBP1 pathway of the unfolded protein response. Interacts with CLU under stressed condition; interaction increases CLU protein stability; facilitates its retrotranslocation and redistribution to the mitochondria; cooperatively suppress stress-induced apoptosis by stabilizing mitochondrial membrane integrity. Interacts with CCDC47. Interacts with CLN3. Interacts with ELAPOR1; may regulate the function of HSPA5 in apoptosis and cell proliferation. Interacts with CASP7. Interacts with ILDR2; the interaction stabilizes ILDR2 expression. Interacts with ADAM7. In terms of processing, in unstressed cells, AMPylation at Thr-162 by FICD inactivates the chaperome activity: AMPylated form is locked in a relatively inert state and only weakly stimulated by J domain-containing proteins. In response to endoplasmic reticulum stress, de-AMPylation by the same protein, FICD, restores the chaperone activity.

It localises to the endoplasmic reticulum lumen. It is found in the melanosome. Its subcellular location is the cytoplasm. The protein localises to the cell surface. It catalyses the reaction ATP + H2O = ADP + phosphate + H(+). Its activity is regulated as follows. The chaperone activity is regulated by ATP-induced allosteric coupling of the nucleotide-binding (NBD) and substrate-binding (SBD) domains. In the ADP-bound and nucleotide-free (apo) states, the two domains have little interaction. In contrast, in the ATP-bound state the two domains are tightly coupled, which results in drastically accelerated kinetics in both binding and release of polypeptide substrates. J domain-containing co-chaperones (DNAJB9/ERdj4 or DNAJC10/ERdj5) stimulate the ATPase activity and are required for efficient substrate recognition by HSPA5/BiP. Homooligomerization inactivates participating HSPA5/BiP protomers and probably act as reservoirs to store HSPA5/BiP molecules when they are not needed by the cell. In terms of biological role, endoplasmic reticulum chaperone that plays a key role in protein folding and quality control in the endoplasmic reticulum lumen. Involved in the correct folding of proteins and degradation of misfolded proteins via its interaction with DNAJC10/ERdj5, probably to facilitate the release of DNAJC10/ERdj5 from its substrate. Acts as a key repressor of the EIF2AK3/PERK and ERN1/IRE1-mediated unfolded protein response (UPR). In the unstressed endoplasmic reticulum, recruited by DNAJB9/ERdj4 to the luminal region of ERN1/IRE1, leading to disrupt the dimerization of ERN1/IRE1, thereby inactivating ERN1/IRE1. Also binds and inactivates EIF2AK3/PERK in unstressed cells. Accumulation of misfolded protein in the endoplasmic reticulum causes release of HSPA5/BiP from ERN1/IRE1 and EIF2AK3/PERK, allowing their homodimerization and subsequent activation. Plays an auxiliary role in post-translational transport of small presecretory proteins across endoplasmic reticulum (ER). May function as an allosteric modulator for SEC61 channel-forming translocon complex, likely cooperating with SEC62 to enable the productive insertion of these precursors into SEC61 channel. Appears to specifically regulate translocation of precursors having inhibitory residues in their mature region that weaken channel gating. May also play a role in apoptosis and cell proliferation. In Sus scrofa (Pig), this protein is Endoplasmic reticulum chaperone BiP.